The primary structure comprises 105 residues: Translation initiation factor 1A 2 (105 aa).

The segment at 1-22 (MRKRREGSAAPSTQEVTRVRTP) is disordered. One can recognise an S1-like domain in the interval 17–91 (TRVRTPRKEN…TKADVIWKYT (75 aa)).

This sequence belongs to the eIF-1A family.

Seems to be required for maximal rate of protein biosynthesis. Enhances ribosome dissociation into subunits and stabilizes the binding of the initiator Met-tRNA(I) to 40 S ribosomal subunits. The chain is Translation initiation factor 1A 2 (eIF1A2) from Methanosarcina acetivorans (strain ATCC 35395 / DSM 2834 / JCM 12185 / C2A).